A 1567-amino-acid chain; its full sequence is Ice nucleation protein (1567 aa).

Low complexity predominate over residues 130–185; it reads PAAEPSAPATQATSATLPTPATPSTQATPSTQSTQSTQSTEATQSTEATPVATVAA. Disordered stretches follow at residues 130–195, 270–329, 356–378, 449–474, 502–529, 594–620, 642–668, 689–716, 738–764, 785–810, 833–860, 929–959, and 977–1004; these read PAAE…QQHD, YGST…KGSD, AGSESSLTAGYGSTQTARKGSDV, TQTSGSDSSLTAGYGSTQTARKGSDI, SESSLTAGYGSTQTAQQDSSLTTGYGST, QTAGSDSSLTAGYGSTQTAREGSDVTA, QTSGSDSSLTAGYGSTQTARKGSDVTA, TQTSGSDSSLTAGYGSTQTARKGSDVTA, TQTSGSDSSLTAGYGSTQTAREGSDVTA, and TQTSGSDSSLTAGYGSTQTARKGSDMTAGYG. A compositionally biased stretch (polar residues) spans 270–282; the sequence is YGSTQTAQEGSRL. The span at 283–296 shows a compositional bias: low complexity; that stretch reads TSGYGSTATSGSDS. Composition is skewed to polar residues over residues 302 to 325, 356 to 373, 449 to 469, and 502 to 519; these read YGSTQTAGSESSLTAGYGSTQTAR, AGSESSLTAGYGSTQTAR, TQTSGSDSSLTAGYGSTQTAR, and SESSLTAGYGSTQTAQQD. Residues 520 to 529 are compositionally biased toward low complexity; sequence SSLTTGYGST. Composition is skewed to polar residues over residues 594–613, 642–661, 689–709, 738–757, 785–805, 833–853, 929–949, and 977–997; these read QTAGSDSSLTAGYGSTQTAR, QTSGSDSSLTAGYGSTQTAR, and TQTSGSDSSLTAGYGSTQTAR.

Belongs to the bacterial ice nucleation protein family.

The protein localises to the cell outer membrane. Functionally, ice nucleation proteins enable bacteria to nucleate crystallization in supercooled water. The chain is Ice nucleation protein (inaX) from Xanthomonas campestris pv. translucens.